Consider the following 283-residue polypeptide: uncharacterized protein (283 aa).

This is an uncharacterized protein from Methanocaldococcus jannaschii (strain ATCC 43067 / DSM 2661 / JAL-1 / JCM 10045 / NBRC 100440) (Methanococcus jannaschii).